We begin with the raw amino-acid sequence, 356 residues long: DNA polymerase IV (356 aa).

The region spanning 1–188 (MDTSRKIIHI…IPVTKFYGVG (188 aa)) is the UmuC domain. Mg(2+) contacts are provided by aspartate 11 and aspartate 106. Residue glutamate 107 is part of the active site.

Belongs to the DNA polymerase type-Y family. Monomer. The cofactor is Mg(2+).

Its subcellular location is the cytoplasm. The enzyme catalyses DNA(n) + a 2'-deoxyribonucleoside 5'-triphosphate = DNA(n+1) + diphosphate. Functionally, poorly processive, error-prone DNA polymerase involved in untargeted mutagenesis. Copies undamaged DNA at stalled replication forks, which arise in vivo from mismatched or misaligned primer ends. These misaligned primers can be extended by PolIV. Exhibits no 3'-5' exonuclease (proofreading) activity. May be involved in translesional synthesis, in conjunction with the beta clamp from PolIII. The chain is DNA polymerase IV from Listeria monocytogenes serovar 1/2a (strain ATCC BAA-679 / EGD-e).